We begin with the raw amino-acid sequence, 530 residues long: Cation transporter HKT2;1 (530 aa).

Residues 1–40 (MTSIYHDFIHNKLQSFGRIGRYFVNFVVLAHRFIALHIHP) are Cytoplasmic-facing. 2 helical membrane-spanning segments follow: residues 41–61 (FWIQLSYFLLISILGSVLLMF) and 102–122 (IVVITLLMLLGGEVFVSFLGL). The Cytoplasmic segment spans residues 123 to 186 (MLRLNHKHNP…DLKRSKRLRW (64 aa)). 2 helical membrane passes run 187–207 (FLGFVVFSYFVVIHVAGFLLV) and 260–280 (GLLLLFIGQILAGNTLYPLFL). At 281–317 (RLLIWFLGKVTKLRELKLMIKNPEELQYDYLLPKLPT) the chain is on the cytoplasmic side. 2 helical membrane-spanning segments follow: residues 318 to 338 (AFLASTVIGLMASLVTLFGAV) and 372 to 392 (IDCSLIAPAVLVLFIILMYLP). Residues 393–418 (PSTTFALSNGDEKTANKKAKRKLGLV) are Cytoplasmic-facing. 2 helical membrane passes run 419-439 (VQNLAFSQLACISVFVIVAFI) and 494-514 (SLSGWWSDEGKLLLVFVMLYG). Topologically, residues 515 to 530 (RLKAFTKGTGEYWRLW) are cytoplasmic.

Belongs to the TrkH potassium transport family. HKT (TC 2.A.38.3) subfamily. As to expression, expressed in epidermis and vascular tissue of endodermis in roots, and in cells surrounding the vasculature in leaves.

It is found in the membrane. It catalyses the reaction Na(+)(in) = Na(+)(out). Functionally, seems to be involved in regulation of potassium-sodium homeostasis. Seems to act as a high-affinity sodium transporter, which mediates increased sodium uptake in roots under potassium deficiency and contributes to sodium accumulation and salt toxicity. Involved in nutritional sodium uptake and distribution in potassium-starved roots to allow plant growth. May also act as a potassium transporter. Functions as a sodium-potassium cotransporter. This is Cation transporter HKT2;1 from Oryza sativa subsp. indica (Rice).